The sequence spans 367 residues: MLLALAQWLAQDVRFFNVFNYITLRAVLAAMTALLLSLAAGPAVIRWLAAKKIGQAVRNDGPQTHLVKSGTPTMGGVLILIAIGITTLLWGDLTNKYVWTVLVVTLGYGIVGWYDDWKKVVYRDPNGLASRWKFFWQSVLGIGAALFIAFSAKSPAQTELIIPFFKTMAYPLGVIGFITLTYFVIVGTSNAVNLTDGLDGLAIMPTVMIAAAFALIAYVTGHAVYAKYLLIPYVPGAGELCIFLGAIAGAGLGFLWFNAYPAEVFMGDVGALALGAALGTVAVIVRQEIVLLIMGGVFVIETLSVMLQVGYFKYTKRKYGEGRRILRMAPLHHHFEQTGWKETQVVVRFWIITIMLVLIGLSTLKLR.

A run of 10 helical transmembrane segments spans residues 27 to 47 (VLAA…VIRW), 73 to 93 (TMGG…WGDL), 97 to 117 (YVWT…YDDW), 132 to 152 (WKFF…AFSA), 167 to 187 (TMAY…VIVG), 200 to 220 (GLAI…AYVT), 237 to 257 (AGEL…FLWF), 264 to 284 (VFMG…VAVI), 289 to 309 (IVLL…MLQV), and 344 to 364 (QVVV…LSTL).

This sequence belongs to the glycosyltransferase 4 family. MraY subfamily. Requires Mg(2+) as cofactor.

It localises to the cell inner membrane. The catalysed reaction is UDP-N-acetyl-alpha-D-muramoyl-L-alanyl-gamma-D-glutamyl-meso-2,6-diaminopimeloyl-D-alanyl-D-alanine + di-trans,octa-cis-undecaprenyl phosphate = di-trans,octa-cis-undecaprenyl diphospho-N-acetyl-alpha-D-muramoyl-L-alanyl-D-glutamyl-meso-2,6-diaminopimeloyl-D-alanyl-D-alanine + UMP. The protein operates within cell wall biogenesis; peptidoglycan biosynthesis. Catalyzes the initial step of the lipid cycle reactions in the biosynthesis of the cell wall peptidoglycan: transfers peptidoglycan precursor phospho-MurNAc-pentapeptide from UDP-MurNAc-pentapeptide onto the lipid carrier undecaprenyl phosphate, yielding undecaprenyl-pyrophosphoryl-MurNAc-pentapeptide, known as lipid I. This Dechloromonas aromatica (strain RCB) protein is Phospho-N-acetylmuramoyl-pentapeptide-transferase.